We begin with the raw amino-acid sequence, 347 residues long: NADH-ubiquinone oxidoreductase chain 2 (347 aa).

A run of 9 helical transmembrane segments spans residues 3–23 (PLALSLILTTLFTGTLITMMS), 59–79 (YFMTQATASMMLMMALTINLM), 93–115 (VASNVALMALMTKLGSAPFHFWV), 150–170 (NTNLIYLSGLLSILIGGWGGL), 178–198 (ILAYSSISHMGWMLIILPFNP), 200–220 (LTLLNLAIYILLTLSIFMILA), 240–260 (MTIMLMTTLLSLGGLPPLSGF), 274–294 (NSIIMPLTMAIMTLLNMYFYT), and 326–346 (LPTLITLSNMLLPLTPMISML).

It belongs to the complex I subunit 2 family. As to quaternary structure, core subunit of respiratory chain NADH dehydrogenase (Complex I) which is composed of 45 different subunits. Interacts with TMEM242.

The protein resides in the mitochondrion inner membrane. The catalysed reaction is a ubiquinone + NADH + 5 H(+)(in) = a ubiquinol + NAD(+) + 4 H(+)(out). Functionally, core subunit of the mitochondrial membrane respiratory chain NADH dehydrogenase (Complex I) which catalyzes electron transfer from NADH through the respiratory chain, using ubiquinone as an electron acceptor. Essential for the catalytic activity and assembly of complex I. The polypeptide is NADH-ubiquinone oxidoreductase chain 2 (Elephas maximus (Indian elephant)).